Reading from the N-terminus, the 156-residue chain is Probable succinate transporter subunit YjjB (156 aa).

The next 4 helical transmembrane spans lie at 7-27 (WALLQDMVLAAIPALGFAMVF), 54-74 (FGMNIELASLVASIMIGVIGI), 86-106 (VFTVAAVIPMFPGISAYTAMI), and 128-148 (FLKASFIVGALSIGLSLPGLW).

This sequence belongs to the ThrE exporter (TC 2.A.79) family. As to quaternary structure, the transporter is composed of YjjB and YjjP.

The protein resides in the cell inner membrane. Involved in succinate export with YjjP. Both proteins are required for export. In Yersinia pseudotuberculosis serotype I (strain IP32953), this protein is Probable succinate transporter subunit YjjB.